We begin with the raw amino-acid sequence, 818 residues long: Actin filament-associated protein 1-like 2 (818 aa).

Tyr56 bears the Phosphotyrosine mark. A disordered region spans residues 66-163 (QNAESQGKAP…SKGKSAPYQW (98 aa)). A compositionally biased stretch (polar residues) spans 85–94 (EPSQHSSAPQ). Residues 123-139 (YYEEAEPYDTSLNEDGE) are compositionally biased toward acidic residues. PH domains are found at residues 175–271 (DARI…EVSG) and 353–447 (SLET…SESG). At Ser408 the chain carries Phosphoserine. Tyr413 is modified (phosphotyrosine). Ser484 carries the post-translational modification Phosphoserine. Residues 513 to 532 (AAVEPTEEATPVADDPNERE) form a disordered region. A coiled-coil region spans residues 652-749 (AEIKLGKNRT…VKDNLKKAEA (98 aa)). Positions 765–787 (NVSPRPKAVTPASAPDCTPVNSA) are disordered.

As to quaternary structure, interacts with SRC. Interacts with LCK when tyrosine phosphorylated. Post-translationally, tyrosine phosphorylated (by SRC). As to expression, detected in spleen and thyroid, and at lower levels in kidney, brain, lung and pancreas.

It localises to the cytoplasm. May play a role in a signaling cascade by enhancing the kinase activity of SRC. Contributes to SRC-regulated transcription activation. The polypeptide is Actin filament-associated protein 1-like 2 (AFAP1L2) (Homo sapiens (Human)).